The following is a 394-amino-acid chain: MPMLQNVTILGATGTIGLNTLDVISRHPGRYRVFALTANSRVDELAELCLQHRPRYAVMLDSGAAEKLQQKLKGLETQVLSGLAALEEVAAHPEAHVVMAAIVGAAGLKPAMAAAYAGKRILLANKETLVMAGKLFMQAVEEGGATLLPIDSEHNAIFQVMPPARLSALADGGIRRILLTASGGPFRKSSFAELMAVTPAQALNHPNWVMGPKITIDSATLMNKGLEVIEAHWLFNAPADKIEVVVHPQSVIHSMVEYIDGSVLAQMGNPDMRTPIAYGLGYPERLKAGVNALDLFKVGRLDFEAPDTARFPCLRLAFDALRHGGTAPAILNAANEVAVDAFLNGNIGFQDIPRLIEAVLTAMDIEAVTSISQLIEVDALARAHALEWRQLEAC.

5 residues coordinate NADPH: threonine 13, glycine 14, threonine 15, isoleucine 16, and asparagine 125. Position 126 (lysine 126) interacts with 1-deoxy-D-xylulose 5-phosphate. Glutamate 127 contacts NADPH. Aspartate 151 contacts Mn(2+). Residues serine 152, glutamate 153, serine 182, and histidine 205 each coordinate 1-deoxy-D-xylulose 5-phosphate. Glutamate 153 lines the Mn(2+) pocket. Residue glycine 211 participates in NADPH binding. Serine 218, asparagine 223, lysine 224, and glutamate 227 together coordinate 1-deoxy-D-xylulose 5-phosphate. Glutamate 227 is a binding site for Mn(2+).

This sequence belongs to the DXR family. Mg(2+) is required as a cofactor. Mn(2+) serves as cofactor.

The enzyme catalyses 2-C-methyl-D-erythritol 4-phosphate + NADP(+) = 1-deoxy-D-xylulose 5-phosphate + NADPH + H(+). The protein operates within isoprenoid biosynthesis; isopentenyl diphosphate biosynthesis via DXP pathway; isopentenyl diphosphate from 1-deoxy-D-xylulose 5-phosphate: step 1/6. Catalyzes the NADPH-dependent rearrangement and reduction of 1-deoxy-D-xylulose-5-phosphate (DXP) to 2-C-methyl-D-erythritol 4-phosphate (MEP). The polypeptide is 1-deoxy-D-xylulose 5-phosphate reductoisomerase (Methylobacillus flagellatus (strain ATCC 51484 / DSM 6875 / VKM B-1610 / KT)).